Here is an 82-residue protein sequence, read N- to C-terminus: U7-hexatoxin-Mg1a (82 aa).

The first 26 residues, 1-26, serve as a signal peptide directing secretion; that stretch reads MRTIVFLIVSILLLSSAVLMLAEGNA. The propeptide occupies 27 to 44; sequence ASHELQEYPIEESLEEQR. Disulfide bonds link Cys46–Cys62, Cys51–Cys67, Cys61–Cys77, and Cys69–Cys75. The residue at position 80 (Arg80) is an Arginine amide.

It belongs to the rTX family. As to expression, expressed by the venom gland.

The protein resides in the secreted. Its function is as follows. Induces flaccid paralysis when injected into lepidopteran larvae. Intracranial injection into mice causes awkwardness of movement and laboured respiration until death. This chain is U7-hexatoxin-Mg1a, found in Macrothele gigas (Japanese funnel web spider).